The following is a 203-amino-acid chain: Translation initiation factor IF-3 (203 aa).

A disordered region spans residues 168 to 203 (QLSPKKKESATKKPATPKPATPAAVKAEKPAGDNEE). Over residues 193 to 203 (KAEKPAGDNEE) the composition is skewed to basic and acidic residues.

The protein belongs to the IF-3 family. Monomer.

The protein resides in the cytoplasm. In terms of biological role, IF-3 binds to the 30S ribosomal subunit and shifts the equilibrium between 70S ribosomes and their 50S and 30S subunits in favor of the free subunits, thus enhancing the availability of 30S subunits on which protein synthesis initiation begins. This chain is Translation initiation factor IF-3, found in Bacteroides fragilis (strain ATCC 25285 / DSM 2151 / CCUG 4856 / JCM 11019 / LMG 10263 / NCTC 9343 / Onslow / VPI 2553 / EN-2).